The chain runs to 97 residues: Signal recognition particle 19 kDa protein (97 aa).

The protein belongs to the SRP19 family. In terms of assembly, part of the signal recognition particle protein translocation system, which is composed of SRP and FtsY. Archaeal SRP consists of a 7S RNA molecule of 300 nucleotides and two protein subunits: SRP54 and SRP19.

Its subcellular location is the cytoplasm. Involved in targeting and insertion of nascent membrane proteins into the cytoplasmic membrane. Binds directly to 7S RNA and mediates binding of the 54 kDa subunit of the SRP. In Methanocella arvoryzae (strain DSM 22066 / NBRC 105507 / MRE50), this protein is Signal recognition particle 19 kDa protein.